The following is a 230-amino-acid chain: Spliceosome-associated protein CWC15 homolog (230 aa).

Disordered stretches follow at residues methionine 1–glutamine 157 and alanine 164–phenylalanine 183. A compositionally biased stretch (polar residues) spans lysine 25–aspartate 34. Coiled-coil stretches lie at residues glycine 47–serine 82 and aspartate 119–alanine 164. Residues alanine 52–aspartate 78 are compositionally biased toward basic and acidic residues. A compositionally biased stretch (acidic residues) spans aspartate 104–threonine 125. Residues glutamate 131–glutamine 157 show a composition bias toward basic and acidic residues.

Belongs to the CWC15 family. Component of spliceosomal complex.

It localises to the nucleus. Functionally, component of a spliceosomal complex that is required for activating pre-mRNA splicing. This Caenorhabditis elegans protein is Spliceosome-associated protein CWC15 homolog.